A 158-amino-acid polypeptide reads, in one-letter code: Pyruvoyl-dependent arginine decarboxylase (158 aa).

S44 is subject to Pyruvic acid (Ser).

Belongs to the PdaD family. Pyruvate is required as a cofactor.

The catalysed reaction is L-arginine + H(+) = agmatine + CO2. The polypeptide is Pyruvoyl-dependent arginine decarboxylase (Thermococcus sibiricus (strain DSM 12597 / MM 739)).